Consider the following 423-residue polypeptide: Putative competence-damage inducible protein (423 aa).

The protein belongs to the CinA family.

The chain is Putative competence-damage inducible protein from Streptococcus pyogenes serotype M4 (strain MGAS10750).